A 184-amino-acid polypeptide reads, in one-letter code: ATP synthase subunit b, chloroplastic (184 aa).

Residues 27–49 (LATNPINLSVVLGVLIFFGKGVL) traverse the membrane as a helical segment.

The protein belongs to the ATPase B chain family. As to quaternary structure, F-type ATPases have 2 components, F(1) - the catalytic core - and F(0) - the membrane proton channel. F(1) has five subunits: alpha(3), beta(3), gamma(1), delta(1), epsilon(1). F(0) has four main subunits: a(1), b(1), b'(1) and c(10-14). The alpha and beta chains form an alternating ring which encloses part of the gamma chain. F(1) is attached to F(0) by a central stalk formed by the gamma and epsilon chains, while a peripheral stalk is formed by the delta, b and b' chains.

Its subcellular location is the plastid. The protein resides in the chloroplast thylakoid membrane. F(1)F(0) ATP synthase produces ATP from ADP in the presence of a proton or sodium gradient. F-type ATPases consist of two structural domains, F(1) containing the extramembraneous catalytic core and F(0) containing the membrane proton channel, linked together by a central stalk and a peripheral stalk. During catalysis, ATP synthesis in the catalytic domain of F(1) is coupled via a rotary mechanism of the central stalk subunits to proton translocation. Functionally, component of the F(0) channel, it forms part of the peripheral stalk, linking F(1) to F(0). This Platanus occidentalis (Sycamore) protein is ATP synthase subunit b, chloroplastic.